The primary structure comprises 413 residues: Arginine biosynthesis bifunctional protein ArgJ (413 aa).

Residues Thr-158, Lys-184, Thr-195, Glu-285, Asn-408, and Ser-413 each coordinate substrate. The active-site Nucleophile is the Thr-195.

It belongs to the ArgJ family. In terms of assembly, heterotetramer of two alpha and two beta chains.

It localises to the cytoplasm. The enzyme catalyses N(2)-acetyl-L-ornithine + L-glutamate = N-acetyl-L-glutamate + L-ornithine. The catalysed reaction is L-glutamate + acetyl-CoA = N-acetyl-L-glutamate + CoA + H(+). The protein operates within amino-acid biosynthesis; L-arginine biosynthesis; L-ornithine and N-acetyl-L-glutamate from L-glutamate and N(2)-acetyl-L-ornithine (cyclic): step 1/1. It participates in amino-acid biosynthesis; L-arginine biosynthesis; N(2)-acetyl-L-ornithine from L-glutamate: step 1/4. Functionally, catalyzes two activities which are involved in the cyclic version of arginine biosynthesis: the synthesis of N-acetylglutamate from glutamate and acetyl-CoA as the acetyl donor, and of ornithine by transacetylation between N(2)-acetylornithine and glutamate. The polypeptide is Arginine biosynthesis bifunctional protein ArgJ (Brucella melitensis biotype 1 (strain ATCC 23456 / CCUG 17765 / NCTC 10094 / 16M)).